Consider the following 271-residue polypeptide: Phosphonoacetaldehyde hydrolase (271 aa).

Asp12 functions as the Nucleophile in the catalytic mechanism. Mg(2+)-binding residues include Asp12 and Ala14. Lys54 serves as the catalytic Schiff-base intermediate with substrate. Asp188 is a Mg(2+) binding site.

This sequence belongs to the HAD-like hydrolase superfamily. PhnX family. In terms of assembly, homodimer. Mg(2+) is required as a cofactor.

The enzyme catalyses phosphonoacetaldehyde + H2O = acetaldehyde + phosphate + H(+). Its function is as follows. Involved in phosphonate degradation. The chain is Phosphonoacetaldehyde hydrolase from Aliivibrio salmonicida (strain LFI1238) (Vibrio salmonicida (strain LFI1238)).